The primary structure comprises 262 residues: 1,2-epoxyphenylacetyl-CoA isomerase (262 aa).

This sequence belongs to the enoyl-CoA hydratase/isomerase family.

The enzyme catalyses 2-(1,2-epoxy-1,2-dihydrophenyl)acetyl-CoA = 2-oxepin-2(3H)-ylideneacetyl-CoA. It functions in the pathway aromatic compound metabolism; phenylacetate degradation. In terms of biological role, catalyzes the reversible conversion of the epoxide to 2-oxepin-2(3H)-ylideneacetyl-CoA (oxepin-CoA). This chain is 1,2-epoxyphenylacetyl-CoA isomerase (paaG), found in Escherichia coli (strain K12).